The chain runs to 396 residues: MPRVKAAQAGRQGPAKRRLAEHFAAGEIITDMNKKEWKLGSPIGQGGFGCIYLADMNSSKSVGNDAPCVVKVEPSDNGPLFTELKFYQRAAKPEQIQKWIRTHKLKYLGVPKYWGSGLHDKNGKSYRFMIIDRFGSDLQKIYEANAKRFSRKTVLQLSLRILDILEYIHEHEYVHGDIKASNLLLSYKNPDQVYLVDYGLAYRYCPEGTHKEYKEDPKRCHDGTVEFTSIDAHNGVAPSRRGDLEILGYCMIQWLSGHLPWEDNLKDPNYVRDSKIRYRENIASLMDKCFPEKNKPDEIAKYMETVKLLDYVEKPLYQKLRDILLQGLKAIGSKDDGKLDLTVVENGSLKAKPVAKKRKKEAEESVESSVEDMECSDKQTEEATQTRSKTRKRVQK.

Residues 37-317 (WKLGSPIGQG…LLDYVEKPLY (281 aa)) enclose the Protein kinase domain. Residues 43-51 (IGQGGFGCI) and K71 contribute to the ATP site. A Glycyl lysine isopeptide (Lys-Gly) (interchain with G-Cter in SUMO2) cross-link involves residue K71. The active-site Proton acceptor is the D177. The tract at residues 352-396 (KPVAKKRKKEAEESVESSVEDMECSDKQTEEATQTRSKTRKRVQK) is disordered. Residues 364 to 374 (ESVESSVEDME) are compositionally biased toward acidic residues. S376 is subject to Phosphoserine. A required for interaction with the nucleosome region spans residues 387 to 393 (RSKTRKR).

Belongs to the protein kinase superfamily. CK1 Ser/Thr protein kinase family. VRK subfamily. As to quaternary structure, interacts with HDAC1, KAT2B, SETDB1, KDM3A and KDM4A. Associates with the nucleosome through interactions with nucleosome DNA, histone H2A and histone H2B; the interaction with H2A and H2B is mediated by the nucleosome acidic patch, a cluster of negatively charged residues of H2A and H2B forming a cleft within the nucleosome core. In terms of processing, autophosphorylated at various serine and threonine residues. Autophosphorylation does not impair its ability to phosphorylate p53/TP53. Phosphorylation by PLK3 leads to induction of Golgi fragmentation during mitosis.

Its subcellular location is the nucleus. The protein localises to the cytoplasm. It is found in the cajal body. The enzyme catalyses L-seryl-[protein] + ATP = O-phospho-L-seryl-[protein] + ADP + H(+). The catalysed reaction is L-threonyl-[protein] + ATP = O-phospho-L-threonyl-[protein] + ADP + H(+). With respect to regulation, active in presence of Mn(2+), Mg(2+) and Zn(2+), but is not functional with Ca(2+) or Cu(2+). Has a higher affinity for Mn(2+) than for Mg(2+). RAN inhibits its autophosphorylation and its ability to phosphorylate histone H3. In terms of biological role, serine/threonine kinase involved in the regulation of key cellular processes including the cell cycle, nuclear condensation, transcription regulation, and DNA damage response. Controls chromatin organization and remodeling by mediating phosphorylation of histone H3 on 'Thr-4' and histone H2AX (H2aXT4ph). It also phosphorylates KAT5 in response to DNA damage, promoting KAT5 association with chromatin and histone acetyltransferase activity. Is involved in the regulation of cell cycle progression of neural progenitors, and is required for proper cortical neuronal migration. Is involved in neurite elongation and branching in motor neurons, and has an essential role in Cajal bodies assembly, acting through COIL phosphorylation and the control of coilin degradation. Involved in Golgi disassembly during the cell cycle: following phosphorylation by PLK3 during mitosis, it is required to induce Golgi fragmentation. Phosphorylates BANF1: disrupts its ability to bind DNA, reduces its binding to LEM domain-containing proteins and causes its relocalization from the nucleus to the cytoplasm. Phosphorylates TP53BP1 and p53/TP53 on 'Thr-18', preventing the interaction between p53/TP53 and MDM2. Phosphorylates ATF2 which activates its transcriptional activity. Phosphorylates JUN. The sequence is that of Serine/threonine-protein kinase VRK1 (VRK1) from Bos taurus (Bovine).